Here is a 469-residue protein sequence, read N- to C-terminus: MQRGIVWVVDDDSSIRWVLERALAGAGLTCTTFENGNEVLAALASKTPDVLLSDIRMPGMDGLALLKQIKQRHPMLPVIIMTAHSDLDAAVSAYQQGAFDYLPKPFDIDEAVALVERAISHYQEQQQPRNIEVNGPTTDMIGEAPAMQDVFRIIGRLSRSSISVLINGESGTGKELVAHALHRHSPRAKAPFIALNMAAIPKDLIESELFGHEKGAFTGANTIRQGRFEQADGGTLFLDEIGDMPLDVQTRLLRVLADGQFYRVGGYAPVKVDVRIIAATHQNLERRVQEGKFREDLFHRLNVIRIHLPPLRERREDIPRLARHFLQVAARELGVEAKLLHPETETALTRLAWPGNVRQLENTCRWLTVMAAGQEVLIQDLPGELFEASTPDSPSHLPPDSWATLLAQWADRALRSGHQNLLSEAQPELERTLLTTALRHTQGHKQEAARLLGWGRNTLTRKLKELGME.

The 115-residue stretch at 5–119 (IVWVVDDDSS…EAVALVERAI (115 aa)) folds into the Response regulatory domain. D54 carries the post-translational modification 4-aspartylphosphate. Residues 140–369 (MIGEAPAMQD…LENTCRWLTV (230 aa)) form the Sigma-54 factor interaction domain. Residues 168–175 (GESGTGKE) and 231–240 (ADGGTLFLDE) contribute to the ATP site. Positions 445 to 464 (KQEAARLLGWGRNTLTRKLK) form a DNA-binding region, H-T-H motif.

In terms of processing, phosphorylated and dephosphorylated by NtrB.

The protein localises to the cytoplasm. Functionally, member of the two-component regulatory system NtrB/NtrC, which controls expression of the nitrogen-regulated (ntr) genes in response to nitrogen limitation. Phosphorylated NtrC binds directly to DNA and stimulates the formation of open promoter-sigma54-RNA polymerase complexes. In Salmonella typhimurium (strain LT2 / SGSC1412 / ATCC 700720), this protein is DNA-binding transcriptional regulator NtrC (glnG).